We begin with the raw amino-acid sequence, 134 residues long: Global transcriptional regulator Spx (134 aa).

Cysteines 10 and 13 form a disulfide.

Belongs to the ArsC family. Spx subfamily. As to quaternary structure, interacts with the C-terminal domain of the alpha subunit of the RNAP.

The protein resides in the cytoplasm. Its function is as follows. Global transcriptional regulator that plays a key role in stress response and exerts either positive or negative regulation of genes. Acts by interacting with the C-terminal domain of the alpha subunit of the RNA polymerase (RNAP). This interaction can enhance binding of RNAP to the promoter region of target genes and stimulate their transcription, or block interaction of RNAP with activator. The chain is Global transcriptional regulator Spx from Streptococcus pyogenes serotype M6 (strain ATCC BAA-946 / MGAS10394).